Reading from the N-terminus, the 288-residue chain is 4-diphosphocytidyl-2-C-methyl-D-erythritol kinase (288 aa).

Residue Lys-11 is part of the active site. Position 93–103 (93–103 (PFGAGLGGGSS)) interacts with ATP. Asp-135 is an active-site residue.

The protein belongs to the GHMP kinase family. IspE subfamily.

It carries out the reaction 4-CDP-2-C-methyl-D-erythritol + ATP = 4-CDP-2-C-methyl-D-erythritol 2-phosphate + ADP + H(+). Its pathway is isoprenoid biosynthesis; isopentenyl diphosphate biosynthesis via DXP pathway; isopentenyl diphosphate from 1-deoxy-D-xylulose 5-phosphate: step 3/6. Its function is as follows. Catalyzes the phosphorylation of the position 2 hydroxy group of 4-diphosphocytidyl-2C-methyl-D-erythritol. In Chlorobium limicola (strain DSM 245 / NBRC 103803 / 6330), this protein is 4-diphosphocytidyl-2-C-methyl-D-erythritol kinase.